Here is a 431-residue protein sequence, read N- to C-terminus: Cortical fragment-lytic enzyme (431 aa).

2 consecutive LysM domains span residues glutamine 2 to isoleucine 46 and glutamine 51 to isoleucine 95. Positions isoleucine 103–arginine 431 constitute a GH18 domain. Chitin contacts are provided by residues valine 148–alanine 149 and glutamate 174–alanine 177. Glutamate 217 functions as the Proton donor in the catalytic mechanism. Residues tyrosine 218, methionine 280–glutamate 283, and tryptophan 406 contribute to the chitin site.

The protein belongs to the glycosyl hydrolase 18 family. Chitinase class II subfamily.

The protein resides in the spore coat. N-acetylglucosaminidase involved in cortex peptidoglycan degradation during germination. Cleaves only partially degraded spore peptidoglycans. Recognizes muramic acid delta-lactam residues specific to spore peptidoglycans. This Bacillus subtilis (strain 168) protein is Cortical fragment-lytic enzyme.